Here is a 517-residue protein sequence, read N- to C-terminus: MSTPPRPLALLILDGWGYSEETASNAIHAAHTPIWDTLWDRYPHTIIRASGAEVGLPNEQMGNSEVGHLNLGSGRVIYQEYTRVNRALRTGSFFTNHTLTEAVDRAVKSDKAIHILGLLSPSGIHCHEDHIHAMVELAIKRRCQEVYLHAFLDGRDTAPKSAQASILAMQAKFTELGKGRFASLIGRYYGMDRDHRWPRIQAAYNLIATGQAEYEAESAKQALAMAYERGETDEFVQATRIVPSGKAPVQVKDGDVIIFMNFRSDRARQITRAFIEPDFTGFERLYWPKLAQFVSLTEYSKEFDIPVAFPSEKPQNTFGQVLAKLGLHQLRIAETEKYAHVTFFFNGGREQPFEGEDRILIPSPQVDTYDQKPEMSAVEVTDNIVKAIESDKYDVIICNYANPDMVGHTGDFNATVKAIETIDQCLGRVWAALQSAGGELIITADHGNAEKMYNAQYQQPHTAHTHNAVPFIFVSERAAIASANGSLADVTPTMLYLMNIKPPPEMSEHRLIELSSP.

Mn(2+)-binding residues include aspartate 14 and serine 64. Serine 64 (phosphoserine intermediate) is an active-site residue. Residues histidine 125, 155 to 156 (RD), arginine 187, arginine 193, 263 to 266 (RSDR), and lysine 337 contribute to the substrate site. Mn(2+)-binding residues include aspartate 404, histidine 408, aspartate 445, histidine 446, and histidine 464.

It belongs to the BPG-independent phosphoglycerate mutase family. As to quaternary structure, monomer. The cofactor is Mn(2+).

The catalysed reaction is (2R)-2-phosphoglycerate = (2R)-3-phosphoglycerate. It participates in carbohydrate degradation; glycolysis; pyruvate from D-glyceraldehyde 3-phosphate: step 3/5. Catalyzes the interconversion of 2-phosphoglycerate and 3-phosphoglycerate. This chain is 2,3-bisphosphoglycerate-independent phosphoglycerate mutase, found in Nitrosococcus oceani (strain ATCC 19707 / BCRC 17464 / JCM 30415 / NCIMB 11848 / C-107).